Reading from the N-terminus, the 95-residue chain is MASIEIPLHEIIRKLERMNQKKQAQRKRHKLNRKERGHKSPSEQRRSELWHARQVELSAINSDNSSDEGTTLCRFDTFGSKSDAICDRSDWCLDQ.

The segment at 8–18 (LHEIIRKLERM) is homotetramerization. A coiled-coil region spans residues 8 to 40 (LHEIIRKLERMNQKKQAQRKRHKLNRKERGHKS). A disordered region spans residues 16-49 (ERMNQKKQAQRKRHKLNRKERGHKSPSEQRRSEL). Residues 23-37 (QAQRKRHKLNRKERG) are compositionally biased toward basic residues. Residues 26–30 (RKRHK) carry the Nuclear localization signal motif. The segment covering 38–49 (HKSPSEQRRSEL) has biased composition (basic and acidic residues).

Belongs to the cucumovirus/ilarvirus protein 2b family. Homodimer. Homotetramer (dimer of dimers).

Its subcellular location is the host nucleus. In terms of biological role, acts as a suppressor of RNA-mediated gene silencing, also known as post-transcriptional gene silencing (PTGS), a mechanism of plant viral defense that limits the accumulation of viral RNAs. Forms a homodimer to measure siRNA duplex in a length-preference mode. Binds to both siRNA duplexes (19bp) and long siRNA duplexes (30bp). In Canna (Florist's daisy), this protein is Suppressor of silencing 2b.